The following is a 285-amino-acid chain: Probable endonuclease 4 (285 aa).

Zn(2+)-binding residues include histidine 69, histidine 109, glutamate 145, aspartate 179, histidine 182, histidine 216, aspartate 229, histidine 231, and glutamate 261.

The protein belongs to the AP endonuclease 2 family. The cofactor is Zn(2+).

The catalysed reaction is Endonucleolytic cleavage to 5'-phosphooligonucleotide end-products.. Functionally, endonuclease IV plays a role in DNA repair. It cleaves phosphodiester bonds at apurinic or apyrimidinic (AP) sites, generating a 3'-hydroxyl group and a 5'-terminal sugar phosphate. This is Probable endonuclease 4 from Shigella sonnei (strain Ss046).